The sequence spans 215 residues: Adenylate kinase (215 aa).

Residue 10–15 (GAGKGT) participates in ATP binding. Residues 30-59 (STGDMLRAAVKAGTELGLKAKSVMDAGGLV) are NMP. Residues Thr-31, Arg-36, 57 to 59 (GLV), 85 to 88 (GFPR), and Gln-92 contribute to the AMP site. The tract at residues 122–159 (GRRVHPASGRVYHTEYNPPKVAGKDDVSGEELVQREDD) is LID. ATP contacts are provided by residues Arg-123 and 132 to 133 (VY). Residues Arg-156 and Arg-167 each coordinate AMP. Position 201 (Gly-201) interacts with ATP.

The protein belongs to the adenylate kinase family. As to quaternary structure, monomer.

Its subcellular location is the cytoplasm. The catalysed reaction is AMP + ATP = 2 ADP. It participates in purine metabolism; AMP biosynthesis via salvage pathway; AMP from ADP: step 1/1. In terms of biological role, catalyzes the reversible transfer of the terminal phosphate group between ATP and AMP. Plays an important role in cellular energy homeostasis and in adenine nucleotide metabolism. The protein is Adenylate kinase of Ectopseudomonas mendocina (strain ymp) (Pseudomonas mendocina).